A 228-amino-acid polypeptide reads, in one-letter code: L-ribulose-5-phosphate 4-epimerase UlaF (228 aa).

Substrate contacts are provided by residues 26 to 27 (GN), 43 to 44 (SG), and 72 to 73 (SS). D74, H93, and H95 together coordinate Zn(2+). D118 acts as the Proton donor/acceptor in catalysis. H167 contributes to the Zn(2+) binding site. The active-site Proton donor/acceptor is the Y225.

Belongs to the aldolase class II family. AraD/FucA subfamily. Zn(2+) serves as cofactor.

The catalysed reaction is L-ribulose 5-phosphate = D-xylulose 5-phosphate. It participates in cofactor degradation; L-ascorbate degradation; D-xylulose 5-phosphate from L-ascorbate: step 4/4. Catalyzes the isomerization of L-ribulose 5-phosphate to D-xylulose 5-phosphate. Is involved in the anaerobic L-ascorbate utilization. The polypeptide is L-ribulose-5-phosphate 4-epimerase UlaF (Escherichia coli O8 (strain IAI1)).